Reading from the N-terminus, the 430-residue chain is Serine--tRNA ligase (430 aa).

Residue 235-237 (TSE) coordinates L-serine. 266 to 268 (RSE) contacts ATP. Glutamate 289 lines the L-serine pocket. 353–356 (EISS) serves as a coordination point for ATP. L-serine is bound at residue serine 388.

The protein belongs to the class-II aminoacyl-tRNA synthetase family. Type-1 seryl-tRNA synthetase subfamily. In terms of assembly, homodimer. The tRNA molecule binds across the dimer.

It is found in the cytoplasm. It catalyses the reaction tRNA(Ser) + L-serine + ATP = L-seryl-tRNA(Ser) + AMP + diphosphate + H(+). The catalysed reaction is tRNA(Sec) + L-serine + ATP = L-seryl-tRNA(Sec) + AMP + diphosphate + H(+). It functions in the pathway aminoacyl-tRNA biosynthesis; selenocysteinyl-tRNA(Sec) biosynthesis; L-seryl-tRNA(Sec) from L-serine and tRNA(Sec): step 1/1. Its function is as follows. Catalyzes the attachment of serine to tRNA(Ser). Is also able to aminoacylate tRNA(Sec) with serine, to form the misacylated tRNA L-seryl-tRNA(Sec), which will be further converted into selenocysteinyl-tRNA(Sec). The protein is Serine--tRNA ligase of Azoarcus sp. (strain BH72).